A 234-amino-acid polypeptide reads, in one-letter code: Orotidine 5'-phosphate decarboxylase (234 aa).

Residues Asp10, Lys32, 59–68 (DLKLHDIPTT), Thr122, Arg184, Gln193, Gly213, and Arg214 each bind substrate. Lys61 functions as the Proton donor in the catalytic mechanism.

Belongs to the OMP decarboxylase family. Type 1 subfamily. In terms of assembly, homodimer.

It carries out the reaction orotidine 5'-phosphate + H(+) = UMP + CO2. The protein operates within pyrimidine metabolism; UMP biosynthesis via de novo pathway; UMP from orotate: step 2/2. Catalyzes the decarboxylation of orotidine 5'-monophosphate (OMP) to uridine 5'-monophosphate (UMP). This is Orotidine 5'-phosphate decarboxylase from Bacillus pumilus (strain SAFR-032).